The primary structure comprises 76 residues: Tautomerase PptA (76 aa).

Pro2 (proton acceptor; via imino nitrogen) is an active-site residue.

Belongs to the 4-oxalocrotonate tautomerase family. PptA subfamily. In terms of assembly, homodimer.

The protein resides in the cytoplasm. This chain is Tautomerase PptA, found in Pectobacterium carotovorum subsp. carotovorum (strain PC1).